The primary structure comprises 449 residues: Glucose-6-phosphate isomerase (449 aa).

Glutamate 291 acts as the Proton donor in catalysis. Residues histidine 312 and lysine 426 contribute to the active site.

It belongs to the GPI family.

The protein localises to the cytoplasm. It carries out the reaction alpha-D-glucose 6-phosphate = beta-D-fructose 6-phosphate. It participates in carbohydrate biosynthesis; gluconeogenesis. It functions in the pathway carbohydrate degradation; glycolysis; D-glyceraldehyde 3-phosphate and glycerone phosphate from D-glucose: step 2/4. Catalyzes the reversible isomerization of glucose-6-phosphate to fructose-6-phosphate. The sequence is that of Glucose-6-phosphate isomerase from Streptococcus pyogenes serotype M18 (strain MGAS8232).